Consider the following 552-residue polypeptide: Arginine--tRNA ligase (552 aa).

Residues 129–139 carry the 'HIGH' region motif; it reads ANPTGPVTLAS.

It belongs to the class-I aminoacyl-tRNA synthetase family. As to quaternary structure, monomer.

It is found in the cytoplasm. It catalyses the reaction tRNA(Arg) + L-arginine + ATP = L-arginyl-tRNA(Arg) + AMP + diphosphate. This Frankia alni (strain DSM 45986 / CECT 9034 / ACN14a) protein is Arginine--tRNA ligase.